The chain runs to 196 residues: Calcineurin B homologous protein 2 (196 aa).

G2 carries the N-myristoyl glycine lipid modification. EF-hand domains are found at residues 26–61, 71–106, 111–146, and 152–187; these read ASLL…AVNP, FPNG…PKQP, SRMN…MVGV, and QLES…MNIE. S27 is subject to Phosphoserine. Residues D124, D126, D128, K130, and E135 each contribute to the Ca(2+) site. A Nuclear export signal motif is present at residues 137–148; that stretch reads LQVLRLMVGVQV. Ca(2+) is bound by residues D165, D167, D169, and E176.

Belongs to the calcineurin regulatory subunit family. CHP subfamily. In terms of assembly, interacts with PPP3CA. Interacts with SLC9A1/NHE1; the interaction occurs in a calcium-dependent manner. Interacts with SLC9A1/NHE1.

It localises to the cytoplasm. The protein resides in the nucleus. Its subcellular location is the cell membrane. In terms of biological role, functions as an integral cofactor in cell pH regulation by controlling plasma membrane-type Na(+)/H(+) exchange activity. Binds to and activates SLC9A1/NHE1 in a serum-independent manner, thus increasing pH and protecting cells from serum deprivation-induced death. Also plays a role in the regulation of cell proliferation and tumor growth by increasing the phosphatase activity of PPP3CA in a calcium-dependent manner. Activator of the calcineurin/NFAT signaling pathway. Involved in the cytoplasmic translocation of the transcription factor NFATC3 to the nucleus. The polypeptide is Calcineurin B homologous protein 2 (Chp2) (Mus musculus (Mouse)).